The primary structure comprises 143 residues: UPF0251 protein Rru_A1194 (143 aa).

A disordered region spans residues 100–143 (LDGSACPNRRQRRGPCARRGAAGALARQTGDEPPSSPTDNEKDD). Residues 116-126 (ARRGAAGALAR) show a composition bias toward low complexity.

This sequence belongs to the UPF0251 family.

This chain is UPF0251 protein Rru_A1194, found in Rhodospirillum rubrum (strain ATCC 11170 / ATH 1.1.1 / DSM 467 / LMG 4362 / NCIMB 8255 / S1).